The chain runs to 167 residues: Putative universal stress protein SSP1056 (167 aa).

It belongs to the universal stress protein A family.

The protein resides in the cytoplasm. The protein is Putative universal stress protein SSP1056 of Staphylococcus saprophyticus subsp. saprophyticus (strain ATCC 15305 / DSM 20229 / NCIMB 8711 / NCTC 7292 / S-41).